Here is a 339-residue protein sequence, read N- to C-terminus: MFYKIAQKVMFQMDPERAHNLAIGSLKMTGNSPLNAFYAQNIAPAPVSFMGLTFPNPVGLAAGMDKDGESIDAFHAMGFGHVEVGTVTPRPQPGNDLPRLFRLKPAKAIINRMGFNNKGVDNLVKNLIAKKTDIMVGVNIGKNKDTPVEQGKDDYLICMDKVYPYAAYIAVNISSPNTPGLRSLQYGDLLDELLSALKTKQLELAEKHKKYVPIALKIAPDLTTEEIENIAQSLIKNKFDGAIATNTTLTRDGVSGLANANESGGLSGKPLTELSTKVIKQLATGLNGQIPIIGVGGINSAEDALAKFDAGATMVQIYSGFIYQGPKLIKEIVEAYRLK.

FMN is bound by residues 62–66 (AGMDK) and Thr-86. Lys-66 is a binding site for substrate. 111 to 115 (NRMGF) lines the substrate pocket. Positions 139 and 172 each coordinate FMN. Asn-172 contacts substrate. Ser-175 acts as the Nucleophile in catalysis. Asn-177 serves as a coordination point for substrate. Residues Lys-217 and Thr-245 each coordinate FMN. 246–247 (NT) is a substrate binding site. FMN contacts are provided by residues Gly-268, Gly-297, and 318–319 (YS).

This sequence belongs to the dihydroorotate dehydrogenase family. Type 2 subfamily. As to quaternary structure, monomer. FMN is required as a cofactor.

The protein localises to the cell membrane. It carries out the reaction (S)-dihydroorotate + a quinone = orotate + a quinol. It participates in pyrimidine metabolism; UMP biosynthesis via de novo pathway; orotate from (S)-dihydroorotate (quinone route): step 1/1. Functionally, catalyzes the conversion of dihydroorotate to orotate with quinone as electron acceptor. This chain is Dihydroorotate dehydrogenase (quinone), found in Shewanella sp. (strain ANA-3).